The chain runs to 432 residues: Fibrinogen gamma chain (432 aa).

Residues 1–24 (MGRIGTPVFLAFLSALTCSLQVHA) form the signal peptide. A Fibrinogen C-terminal domain is found at 169-412 (KISPITGKDC…MTTMKLLPMG (244 aa)). A disulfide bond links Cys178 and Cys207. Asn227 is a glycosylation site (N-linked (GlcNAc...) asparagine). Ca(2+)-binding residues include Asp340, Asp342, Tyr344, and Gly346. Residues Cys348 and Cys361 are joined by a disulfide bond. Residues 413 to 432 (RDLSGHGGQQQSKGNSRGDN) are disordered. Residues 421–432 (QQQSKGNSRGDN) are compositionally biased toward polar residues.

In terms of assembly, heterohexamer; disulfide linked. Contains 2 sets of 3 non-identical chains (alpha, beta and gamma). The 2 heterotrimers are in head to head conformation with the N-termini in a small central domain. Post-translationally, conversion of fibrinogen to fibrin is triggered by thrombin, which cleaves fibrinopeptides A and B from alpha and beta chains, and thus exposes the N-terminal polymerization sites responsible for the formation of the soft clot. The soft clot is converted into the hard clot by factor XIIIA which catalyzes the epsilon-(gamma-glutamyl)lysine cross-linking between gamma chains (stronger) and between alpha chains (weaker) of different monomers.

It is found in the secreted. In terms of biological role, together with fibrinogen alpha (FGA) and fibrinogen beta (FGB), polymerizes to form an insoluble fibrin matrix. Has a major function in hemostasis as one of the primary components of blood clots. The polypeptide is Fibrinogen gamma chain (FGG) (Petromyzon marinus (Sea lamprey)).